We begin with the raw amino-acid sequence, 199 residues long: Ribonuclease P protein subunit p25 (199 aa).

The segment covering 1–11 (MENFRKVRSEE) has biased composition (basic and acidic residues). Disordered stretches follow at residues 1–31 (MENF…FADL) and 146–199 (PRQL…DRTA). Ser-172 carries the phosphoserine modification. Acidic residues predominate over residues 190 to 199 (PEAENEDRTA).

Belongs to the histone-like Alba family. Component of nuclear RNase P and RNase MRP ribonucleoproteins. RNase P consists of a catalytic RNA moiety and 10 different protein chains; POP1, POP4, POP5, POP7, RPP14, RPP21, RPP25, RPP30, RPP38 and RPP40. Within the RNase P complex, POP1, POP7 and RPP25 form the 'finger' subcomplex, POP5, RPP14, RPP40 and homodimeric RPP30 form the 'palm' subcomplex, and RPP21, POP4 and RPP38 form the 'wrist' subcomplex. All subunits of the RNase P complex interact with the catalytic RNA. Several subunits of RNase P are also part of the RNase MRP complex. RNase MRP consists of a catalytic RNA moiety and about 8 protein subunits; POP1, POP7, RPP25, RPP30, RPP38, RPP40 and possibly also POP4 and POP5. POP7 forms a heterodimer with RPP25 that binds to the P3 stem loop of the catalytic RNA.

The protein resides in the nucleus. The protein localises to the nucleolus. Functionally, component of ribonuclease P, a ribonucleoprotein complex that generates mature tRNA molecules by cleaving their 5'-ends. Also a component of the MRP ribonuclease complex, which cleaves pre-rRNA sequences. This Mus musculus (Mouse) protein is Ribonuclease P protein subunit p25 (Rpp25).